The sequence spans 118 residues: MRAKDAIGAYGERVAGRWLEAEGLEVVERNWRCPDGELDLVARDGETLVFVEVKTRSSLAFGHPGEAVTRLKLARLRRLAARWLAEHDAHAREVRIDVVAVLRTRAGAARVEHLRGVG.

Belongs to the UPF0102 family.

This is UPF0102 protein Bcav_2532 from Beutenbergia cavernae (strain ATCC BAA-8 / DSM 12333 / CCUG 43141 / JCM 11478 / NBRC 16432 / NCIMB 13614 / HKI 0122).